Reading from the N-terminus, the 96-residue chain is Putative pterin-4-alpha-carbinolamine dehydratase (96 aa).

This sequence belongs to the pterin-4-alpha-carbinolamine dehydratase family.

It carries out the reaction (4aS,6R)-4a-hydroxy-L-erythro-5,6,7,8-tetrahydrobiopterin = (6R)-L-erythro-6,7-dihydrobiopterin + H2O. The protein is Putative pterin-4-alpha-carbinolamine dehydratase of Paraburkholderia phytofirmans (strain DSM 17436 / LMG 22146 / PsJN) (Burkholderia phytofirmans).